The following is a 140-amino-acid chain: Nucleoside diphosphate kinase (140 aa).

6 residues coordinate ATP: Lys11, Phe59, Arg87, Thr93, Arg104, and Asn114. His117 serves as the catalytic Pros-phosphohistidine intermediate.

The protein belongs to the NDK family. Homotetramer. The cofactor is Mg(2+).

The protein localises to the cytoplasm. It catalyses the reaction a 2'-deoxyribonucleoside 5'-diphosphate + ATP = a 2'-deoxyribonucleoside 5'-triphosphate + ADP. It carries out the reaction a ribonucleoside 5'-diphosphate + ATP = a ribonucleoside 5'-triphosphate + ADP. In terms of biological role, major role in the synthesis of nucleoside triphosphates other than ATP. The ATP gamma phosphate is transferred to the NDP beta phosphate via a ping-pong mechanism, using a phosphorylated active-site intermediate. This chain is Nucleoside diphosphate kinase, found in Xanthobacter autotrophicus (strain ATCC BAA-1158 / Py2).